Reading from the N-terminus, the 685-residue chain is Putative pentatricopeptide repeat-containing protein At3g08820 (685 aa).

PPR repeat units follow at residues 75-109, 110-144, 145-175, 176-210, 211-245, 246-276, 277-311, 312-346, 347-381, 383-412, 413-443, and 449-479; these read NIFLYNSLINGFVNNHLFHETLDLFLSIRKHGLYL, HGFTFPLVLKACTRASSRKLGIDLHSLVVKCGFNH, DVAAMTSLLSIYSGSGRLNDAHKLFDEIPDR, SVVTWTALFSGYTTSGRHREAIDLFKKMVEMGVKP, DSYFIVQVLSACVHVGDLDSGEWIVKYMEEMEMQK, NSFVRTTLVNLYAKCGKMEKARSVFDSMVEK, DIVTWSTMIQGYASNSFPKEGIELFLQMLQENLKP, DQFSIVGFLSSCASLGALDLGEWGISLIDRHEFLT, NLFMANALIDMYAKCGAMARGFEVFKEMKEKDIVI, NAAISGLAKNGHVKLSFAVFGQTEKLGISP, DGSTFLGLLCGCVHAGLIQDGLRFFNAISCV, and TVEHYGCMVDLWGRAGMLDDAYRLICDMPMR. The tract at residues 484-559 is type E motif; sequence VWGALLSGCR…IPGYSWIELE (76 aa). Residues 560–590 form a type E(+) motif region; the sequence is GKVHEFLADDKSHPLSDKIYAKLEDLGNEMR. Residues 591–685 are type DYW motif; sequence LMGFVPTTEF…NGSCSCNDYW (95 aa).

Belongs to the PPR family. PCMP-H subfamily.

The chain is Putative pentatricopeptide repeat-containing protein At3g08820 (PCMP-H84) from Arabidopsis thaliana (Mouse-ear cress).